Reading from the N-terminus, the 483-residue chain is Probable cytosol aminopeptidase (483 aa).

Mn(2+)-binding residues include Lys-252 and Asp-257. Residue Lys-264 is part of the active site. Mn(2+)-binding residues include Asp-275, Asp-334, and Glu-336. Arg-338 is a catalytic residue.

It belongs to the peptidase M17 family. Mn(2+) is required as a cofactor.

Its subcellular location is the cytoplasm. The catalysed reaction is Release of an N-terminal amino acid, Xaa-|-Yaa-, in which Xaa is preferably Leu, but may be other amino acids including Pro although not Arg or Lys, and Yaa may be Pro. Amino acid amides and methyl esters are also readily hydrolyzed, but rates on arylamides are exceedingly low.. The enzyme catalyses Release of an N-terminal amino acid, preferentially leucine, but not glutamic or aspartic acids.. In terms of biological role, presumably involved in the processing and regular turnover of intracellular proteins. Catalyzes the removal of unsubstituted N-terminal amino acids from various peptides. This Legionella pneumophila (strain Corby) protein is Probable cytosol aminopeptidase.